A 120-amino-acid chain; its full sequence is Large ribosomal subunit protein eL18 (120 aa).

The protein belongs to the eukaryotic ribosomal protein eL18 family.

This Methanococcus maripaludis (strain DSM 14266 / JCM 13030 / NBRC 101832 / S2 / LL) protein is Large ribosomal subunit protein eL18.